The chain runs to 100 residues: Small ribosomal subunit protein uS14c (100 aa).

This sequence belongs to the universal ribosomal protein uS14 family. In terms of assembly, part of the 30S ribosomal subunit.

It is found in the plastid. The protein localises to the chloroplast. In terms of biological role, binds 16S rRNA, required for the assembly of 30S particles. In Physcomitrium patens (Spreading-leaved earth moss), this protein is Small ribosomal subunit protein uS14c.